We begin with the raw amino-acid sequence, 219 residues long: Ribose-5-phosphate isomerase A (219 aa).

Residues 28–31 (SGST), 81–84 (DGAD), and 94–97 (KGGG) each bind substrate. Glu-103 functions as the Proton acceptor in the catalytic mechanism. Lys-121 lines the substrate pocket.

Belongs to the ribose 5-phosphate isomerase family. In terms of assembly, homodimer.

It catalyses the reaction aldehydo-D-ribose 5-phosphate = D-ribulose 5-phosphate. It functions in the pathway carbohydrate degradation; pentose phosphate pathway; D-ribose 5-phosphate from D-ribulose 5-phosphate (non-oxidative stage): step 1/1. In terms of biological role, catalyzes the reversible conversion of ribose-5-phosphate to ribulose 5-phosphate. This is Ribose-5-phosphate isomerase A from Haemophilus influenzae (strain 86-028NP).